We begin with the raw amino-acid sequence, 874 residues long: Bifunctional apolipoprotein N-acyltransferase/polyprenol monophosphomannose synthase (874 aa).

The tract at residues 1-593 (MKLGAWVAAQ…GRHRATSRSY (593 aa)) is apolipoprotein N-acyltransferase. The next 5 helical transmembrane spans lie at 23-42 (TRLV…FPPR), 72-89 (YGLL…PWIG), 94-115 (PGPW…GLFA), 177-194 (VALV…IEKW), and 206-223 (AVVL…AAIV). The region spanning 241–497 (VTVAVVQGNV…PAYLDSQVRL (257 aa)) is the CN hydrolase domain. The active-site Proton acceptor is E294. K359 is an active-site residue. Residue C409 is the Nucleophile of the active site. A helical transmembrane segment spans residues 509 to 526 (PILQWILVGAAAAVVLVA). Disordered regions lie at residues 533 to 609 (FPRP…NRPS) and 852 to 874 (RARP…DVTE). The segment at 594–874 (MTTGQPAPPA…SRVSRADVTE (281 aa)) is polyprenol monophosphomannose synthase.

It in the N-terminal section; belongs to the CN hydrolase family. Apolipoprotein N-acyltransferase subfamily. The protein in the C-terminal section; belongs to the glycosyltransferase 2 family.

The protein resides in the cell membrane. It carries out the reaction N-terminal S-1,2-diacyl-sn-glyceryl-L-cysteinyl-[lipoprotein] + a glycerophospholipid = N-acyl-S-1,2-diacyl-sn-glyceryl-L-cysteinyl-[lipoprotein] + a 2-acyl-sn-glycero-3-phospholipid + H(+). The catalysed reaction is a di-trans,poly-cis-dolichyl phosphate + GDP-alpha-D-mannose = a di-trans,poly-cis-dolichyl beta-D-mannosyl phosphate + GDP. Its pathway is protein modification; lipoprotein biosynthesis (N-acyl transfer). In terms of biological role, catalyzes the phospholipid dependent N-acylation of the N-terminal cysteine of apolipoprotein, the last step in lipoprotein maturation. Functionally, transfers mannose from GDP-mannose to lipid acceptors to form polyprenol monophosphomannose (PPM). PMM is an alkai-stable sugar donor which adds mannose-phosphate residues to triacylated-phosphatidyl-myo-inositol mannosides (PIM2), eventually leading to generation of the cell wall glycolipid lipoglycan modulins lipoarabinomannan (LAM) and lipomannan (LM). In Mycobacterium bovis (strain BCG / Pasteur 1173P2), this protein is Bifunctional apolipoprotein N-acyltransferase/polyprenol monophosphomannose synthase.